An 84-amino-acid chain; its full sequence is UPF0248 protein Pisl_1919 (84 aa).

It belongs to the UPF0248 family.

The chain is UPF0248 protein Pisl_1919 from Pyrobaculum islandicum (strain DSM 4184 / JCM 9189 / GEO3).